A 235-amino-acid chain; its full sequence is Large ribosomal subunit protein uL1 (235 aa).

This sequence belongs to the universal ribosomal protein uL1 family. As to quaternary structure, part of the 50S ribosomal subunit.

Its function is as follows. Binds directly to 23S rRNA. The L1 stalk is quite mobile in the ribosome, and is involved in E site tRNA release. Functionally, protein L1 is also a translational repressor protein, it controls the translation of the L11 operon by binding to its mRNA. The sequence is that of Large ribosomal subunit protein uL1 from Methylobacterium nodulans (strain LMG 21967 / CNCM I-2342 / ORS 2060).